Reading from the N-terminus, the 300-residue chain is Free fatty acid receptor 1 (300 aa).

Residues 1–8 lie on the Extracellular side of the membrane; it reads MDLPPQLS. A helical membrane pass occupies residues 9-31; sequence FALYVSAFALGFPLNLLAIRGAV. At 32 to 41 the chain is on the cytoplasmic side; the sequence is SHAKLRLTPS. The helical transmembrane segment at 42-64 threads the bilayer; sequence LVYTLHLGCSDLLLAITLPLKAV. The Extracellular portion of the chain corresponds to 65–79; that stretch reads EALASGAWPLPLPFC. C79 and C170 are joined by a disulfide. A helical transmembrane segment spans residues 80-101; sequence PVFALAHFAPLYAGGGFLAALS. Residues 102–121 lie on the Cytoplasmic side of the membrane; it reads AGRYLGAAFPFGYQAIRRPR. The chain crosses the membrane as a helical span at residues 122 to 142; it reads YSWGVCVAIWALVLCHLGLAL. Over 143–178 the chain is Extracellular; it reads GLETSGSWLDNSTSSLGINIPVNGSPVCLEAWDPDS. N153 carries N-linked (GlcNAc...) asparagine glycosylation. Residues 179–200 form a helical membrane-spanning segment; the sequence is ARPARLSFSILLFFLPLVITAF. Over 201 to 223 the chain is Cytoplasmic; sequence CYVGCLRALVRSGLSHKRKLRAA. Residues 224–248 traverse the membrane as a helical segment; it reads WVAGGALLTLLLCLGPYNASNVASF. Over 249 to 256 the chain is Extracellular; it reads INPDLGGS. A helical transmembrane segment spans residues 257–279; sequence WRKLGLITGAWSVVLNPLVTGYL. The Cytoplasmic segment spans residues 280-300; the sequence is GTGPGRGTICVTRTQRGTIQK.

The protein belongs to the G-protein coupled receptor 1 family. In terms of tissue distribution, expressed in pancreatic islet beta cells (at protein level). Expressed in pancreatic islet beta cells.

Its subcellular location is the cell membrane. Its activity is regulated as follows. Is also activated by synthetic agonists, such as AM-8182, AM-6331 and TAK-875 (fasiglifam). AM-8182 is a full agonist, while AM-6331 and TAK-875 (fasiglifam) are partial agonists that potentiate the activity of the endogenous ligands, such as alpha-linolenic acid and gamma-linolenic acid. Functionally, G-protein coupled receptor for medium and long chain saturated and unsaturated fatty acids that plays an important role in glucose homeostasis. Fatty acid binding increases glucose-stimulated insulin secretion, and may also enhance the secretion of glucagon-like peptide 1 (GLP-1). May also play a role in bone homeostasis; receptor signaling activates pathways that inhibit osteoclast differentiation. Ligand binding leads to a conformation change that triggers signaling via G-proteins that activate phospholipase C, leading to an increase of the intracellular calcium concentration. Seems to act through a G(q) and G(i)-mediated pathway. Mediates the anti-inflammatory effects of omega-3 polyunsaturated fatty acids (PUFAs) via inhibition of NLRP3 inflammasome activation. The chain is Free fatty acid receptor 1 (Ffar1) from Mus musculus (Mouse).